Here is a 341-residue protein sequence, read N- to C-terminus: UDP-3-O-acylglucosamine N-acyltransferase (341 aa).

His239 serves as the catalytic Proton acceptor.

Belongs to the transferase hexapeptide repeat family. LpxD subfamily. Homotrimer.

It carries out the reaction a UDP-3-O-[(3R)-3-hydroxyacyl]-alpha-D-glucosamine + a (3R)-hydroxyacyl-[ACP] = a UDP-2-N,3-O-bis[(3R)-3-hydroxyacyl]-alpha-D-glucosamine + holo-[ACP] + H(+). The protein operates within bacterial outer membrane biogenesis; LPS lipid A biosynthesis. In terms of biological role, catalyzes the N-acylation of UDP-3-O-acylglucosamine using 3-hydroxyacyl-ACP as the acyl donor. Is involved in the biosynthesis of lipid A, a phosphorylated glycolipid that anchors the lipopolysaccharide to the outer membrane of the cell. The chain is UDP-3-O-acylglucosamine N-acyltransferase from Photobacterium profundum (strain SS9).